A 681-amino-acid polypeptide reads, in one-letter code: PTS system glucose-specific EIICBA component (681 aa).

In terms of domain architecture, PTS EIIC type-1 spans 3–414 (KKLFGQLQRI…LKYKTPGRED (412 aa)). A run of 10 helical transmembrane segments spans residues 16–36 (LMLP…GTAI), 73–93 (MIFA…AAIA), 126–146 (ILGI…GALA), 170–190 (FVPI…ALIW), 199–219 (AFST…FGFI), 273–293 (FMQG…LAIY), 303–323 (VVAG…ITEP), 328–348 (FLFV…LSFL), 355–375 (VHLG…GVLP), and 383–403 (VIPV…FLIV). Residues 425 to 506 (TELPYAVLEA…QQIMNGQVVE (82 aa)) enclose the PTS EIIB type-1 domain. Residue cysteine 447 is the Phosphocysteine intermediate; for EIIB activity of the active site. The region spanning 551–655 (DQVFSEKMMG…SDITPIIVTQ (105 aa)) is the PTS EIIA type-1 domain. Catalysis depends on histidine 603, which acts as the Tele-phosphohistidine intermediate; for EIIA activity.

The protein resides in the cell membrane. It carries out the reaction N(pros)-phospho-L-histidyl-[protein] + D-glucose(out) = D-glucose 6-phosphate(in) + L-histidyl-[protein]. Its function is as follows. The phosphoenolpyruvate-dependent sugar phosphotransferase system (sugar PTS), a major carbohydrate active transport system, catalyzes the phosphorylation of incoming sugar substrates concomitantly with their translocation across the cell membrane. This system is involved in glucose transport. The sequence is that of PTS system glucose-specific EIICBA component (ptsG) from Staphylococcus aureus (strain JH9).